The primary structure comprises 944 residues: UvrABC system protein A (944 aa).

33–40 (GLSGSGKS) serves as a coordination point for ATP. Residues 252–279 (CPICGFSIGELEPRMFSFNSPFGACPTC) form a C4-type zinc finger. ABC transporter domains lie at 309–587 (WEPT…KKSL) and 607–935 (ITDR…QYLK). Residue 639 to 646 (GVSGSGKS) coordinates ATP. A C4-type zinc finger spans residues 738–764 (CEACKGDGIIKIEMHFLPDVYVPCEVC).

Belongs to the ABC transporter superfamily. UvrA family. Forms a heterotetramer with UvrB during the search for lesions.

The protein localises to the cytoplasm. Functionally, the UvrABC repair system catalyzes the recognition and processing of DNA lesions. UvrA is an ATPase and a DNA-binding protein. A damage recognition complex composed of 2 UvrA and 2 UvrB subunits scans DNA for abnormalities. When the presence of a lesion has been verified by UvrB, the UvrA molecules dissociate. This Staphylococcus epidermidis (strain ATCC 12228 / FDA PCI 1200) protein is UvrABC system protein A.